The chain runs to 297 residues: Ribosomal RNA small subunit methyltransferase A (297 aa).

Positions 31, 33, 58, 79, 104, and 129 each coordinate S-adenosyl-L-methionine.

Belongs to the class I-like SAM-binding methyltransferase superfamily. rRNA adenine N(6)-methyltransferase family. RsmA subfamily.

The protein resides in the cytoplasm. It catalyses the reaction adenosine(1518)/adenosine(1519) in 16S rRNA + 4 S-adenosyl-L-methionine = N(6)-dimethyladenosine(1518)/N(6)-dimethyladenosine(1519) in 16S rRNA + 4 S-adenosyl-L-homocysteine + 4 H(+). Its function is as follows. Specifically dimethylates two adjacent adenosines (A1518 and A1519) in the loop of a conserved hairpin near the 3'-end of 16S rRNA in the 30S particle. May play a critical role in biogenesis of 30S subunits. The chain is Ribosomal RNA small subunit methyltransferase A from Pediococcus pentosaceus (strain ATCC 25745 / CCUG 21536 / LMG 10740 / 183-1w).